We begin with the raw amino-acid sequence, 189 residues long: Blue copper protein (189 aa).

Residues 1–24 (MAFSNALVLCFLLAIINMALPSLA) form the signal peptide. Residues 25 to 124 (TVYTVGDTSG…GMKLSIKVKA (100 aa)) form the Phytocyanin domain. Residues histidine 65, cysteine 106, and histidine 111 each contribute to the Cu cation site. A disulfide bridge connects residues cysteine 78 and cysteine 106. The span at 127–160 (GSSAAPSATPSSSGKGSPSSDDTPAATTTTTTPT) shows a compositional bias: low complexity. Positions 127–165 (GSSAAPSATPSSSGKGSPSSDDTPAATTTTTTPTKQNES) are disordered. N-linked (GlcNAc...) asparagine glycosylation occurs at asparagine 163.

The sequence is that of Blue copper protein from Pisum sativum (Garden pea).